Consider the following 673-residue polypeptide: Outer spore wall assembly protein SHE10 (673 aa).

The N-terminal stretch at 1 to 24 (MRRVRGVGNLLVTILVVLIGFKQA) is a signal peptide. Positions 503 to 568 (ILRSQANIAF…LALEQGQGQE (66 aa)) form a coiled coil. 2 disordered regions span residues 530–551 (LEQE…AENE) and 587–673 (TPLG…SQAN). Acidic residues-rich tracts occupy residues 593 to 605 (DNTD…DDAD) and 612 to 629 (GDSE…EEDA). Positions 617–647 (NFYDSYEGDEEDASRELERLERESAERETLD) form a coiled coil. A compositionally biased stretch (basic and acidic residues) spans 630–673 (SRELERLERESAERETLDRLELGQRQKLQEEQHRDELHHSSQAN).

This sequence belongs to the SHE10 family. Component of the mitochondria-localized RNase mitochondrial RNA-processing (RNase MRP) composed of one single RNA encoded by the NME1 gene and at least 31 proteins. Absent in the nucleus-localized RNase MRP (NuMRP).

The protein resides in the mitochondrion. Involved in spore wall assembly. May be a component of the mitochondrial RNase MRP (MtMRP), a ribonucleoprotein endoribonuclease involved in the cleaving RNA transcripts to generate primers for DNA replication in mitochondria. In Lachancea thermotolerans (strain ATCC 56472 / CBS 6340 / NRRL Y-8284) (Yeast), this protein is Outer spore wall assembly protein SHE10.